The following is a 145-amino-acid chain: uncharacterized protein (145 aa).

The next 4 membrane-spanning stretches (helical) occupy residues 1 to 21 (MELFKSIVAVIGIIATIYFLI), 28 to 48 (TVLIGVGLIMSILTLNPMGAL), 54 to 74 (SMTSGGLIMAICSSMGFAYVM), and 96 to 116 (FFLIPIATIITFFINIAIPSA).

It belongs to the DcuC/DcuD transporter (TC 2.A.61) family.

Its subcellular location is the cell membrane. This is an uncharacterized protein from Haemophilus influenzae (strain ATCC 51907 / DSM 11121 / KW20 / Rd).